A 429-amino-acid chain; its full sequence is Phosphoglucosamine mutase (429 aa).

Ser-96 functions as the Phosphoserine intermediate in the catalytic mechanism. Positions 96, 230, 232, and 234 each coordinate Mg(2+). Ser-96 carries the phosphoserine modification.

The protein belongs to the phosphohexose mutase family. The cofactor is Mg(2+). In terms of processing, activated by phosphorylation.

The catalysed reaction is alpha-D-glucosamine 1-phosphate = D-glucosamine 6-phosphate. Catalyzes the conversion of glucosamine-6-phosphate to glucosamine-1-phosphate. This is Phosphoglucosamine mutase from Thermotoga maritima (strain ATCC 43589 / DSM 3109 / JCM 10099 / NBRC 100826 / MSB8).